A 116-amino-acid polypeptide reads, in one-letter code: UPF0342 protein lhv_1666 (116 aa).

The protein belongs to the UPF0342 family.

The protein is UPF0342 protein lhv_1666 of Lactobacillus helveticus (strain DPC 4571).